A 1607-amino-acid polypeptide reads, in one-letter code: Phosphatidylinositol 3-kinase piki-1 (1607 aa).

In terms of domain architecture, UIM spans 2–21; it reads SDDEELQLAIEISKKTFKDE. Disordered stretches follow at residues 54-91, 105-128, and 142-182; these read EANS…HSQS, STSQ…KFPP, and PPPP…SFAS. Positions 58 to 69 are enriched in polar residues; sequence PGPSSYSGSLAT. The span at 158–169 shows a compositional bias: pro residues; it reads PPVPIHPTPPVS. Positions 362–453 constitute a PI3K-RBD domain; the sequence is ASTVKVVVYK…GDDVKLDLGV (92 aa). Residues 598-766 enclose the C2 PI3K-type domain; sequence KMDFLQIMLN…KIWDTEIYFP (169 aa). In terms of domain architecture, PIK helical spans 776-953; the sequence is PQDFATLDIE…AIRCQNLQQK (178 aa). The region spanning 1029–1303 is the PI3K/PI4K catalytic domain; that stretch reads RIEECSVFNS…MIQNSLGSAF (275 aa). The G-loop stretch occupies residues 1035–1041; that stretch reads VFNSNAK. A catalytic loop region spans residues 1168–1176; it reads GIGDRHNDN. Residues 1187–1213 are activation loop; that stretch reads HIDFGKYMGDWQMAAGFRRDRVPFVFT. In terms of domain architecture, PX spans 1344 to 1458; that stretch reads GRISRVTVLK…TFFHSILRDN (115 aa). The 130-residue stretch at 1472-1601 folds into the C2 domain; the sequence is SQCQIYLKIE…KNCRTLEGWF (130 aa).

Belongs to the PI3/PI4-kinase family.

The protein resides in the cell projection. The protein localises to the phagocytic cup. Its subcellular location is the cytoplasmic vesicle. It is found in the phagosome membrane. It localises to the cytoplasm. The catalysed reaction is a 1,2-diacyl-sn-glycero-3-phospho-(1D-myo-inositol) + ATP = a 1,2-diacyl-sn-glycero-3-phospho-(1D-myo-inositol-3-phosphate) + ADP + H(+). Functionally, phosphatidylinositol 3-kinase involved in clearance of apoptotic cell corpses by phagosomes. Phagosome maturation requires two sequential and non-overlapping pulses of phosphatidylinositol-3-phosphate (PI3P) on the vesicle surface which mediates recruitment of sortins snx-1 and lst-4 and small GTPases rab-5, rab-2 and rab-7. The first pulse is initiated by piki-1, then maintained by vps-34 which also produces the second pulse. Unlike vps-34, not involved in the formation of PI3P in early endosomes. This is Phosphatidylinositol 3-kinase piki-1 from Caenorhabditis elegans.